Consider the following 957-residue polypeptide: SLIT and NTRK-like protein 5 (957 aa).

The N-terminal stretch at 1–40 (MHVCCPPVTLEQDLHRKMHSWMLQTLAFAVTSLVLSCAET) is a signal peptide. The Extracellular portion of the chain corresponds to 41 to 664 (IDYYGEICDN…GTGASSVPLS (624 aa)). LRR repeat units lie at residues 82–103 (PIYH…EFVN), 106–127 (GASI…AFHG), 130–151 (GLRR…TFLG), 154–175 (NLEY…AFGK), 178–199 (MLQV…LFRF), and 201–222 (PLTH…GLLQ). A glycan (N-linked (GlcNAc...) asparagine) is linked at asparagine 103. Residues 235–286 (NPWNCSCELISLKDWLDSISYSALVGDVVCETPFRLHGRDLDEVSKQELCPR) form the LRRCT 1 domain. The disordered stretch occupies residues 317 to 358 (ATSSSAVYKPPLKPPKGTRQPNKPRVRPTSRQPSKDLGYSNY). An LRRNT domain is found at 365 to 407 (QTKSPVPLECPTACTCNLQISDLGLNVNCQERKIESIAELQPK). 6 LRR repeats span residues 410-431 (NPKK…DFLE), 434-455 (GLDL…AFGD), 458-479 (NLRR…LFYG), 482-503 (SLQY…TFDP), 506-527 (NLQL…VFSG), and 529-550 (TLLR…GVLD). The 52-residue stretch at 563–614 (NPWDCTCDVVGMKLWIEQLKVGVLVDEVICKAPKKFAETYMRSIKSELLCPD) folds into the LRRCT 2 domain. The segment covering 623–632 (PTPSSIQVPS) has biased composition (low complexity). The segment at 623-642 (PTPSSIQVPSRTNAATPAVR) is disordered. N-linked (GlcNAc...) asparagine glycosylation is present at asparagine 644. Residues 665-685 (VLILSLLLVFIMSVFVAAGLF) traverse the membrane as a helical segment. Residues 686 to 957 (VLVMKRRKKN…LEKQTTFSQF (272 aa)) are Cytoplasmic-facing. Residues 789-844 (SNHHLQQQPPPPPQQPQQQPPPQMQMQPGEEERRESHHLRSPAYSVSTIEPREDLL) form a disordered region. The span at 796 to 811 (QPPPPPQQPQQQPPPQ) shows a compositional bias: pro residues.

This sequence belongs to the SLITRK family. In terms of tissue distribution, in the adult, significant expression is detected only in the brain. In the embryo, expressed in the subventricular zone, cortical plate, pyramidal layer of hippocampus, thalamus and hypothalamus.

The protein localises to the membrane. Suppresses neurite outgrowth. This is SLIT and NTRK-like protein 5 (Slitrk5) from Mus musculus (Mouse).